The primary structure comprises 476 residues: Serine/threonine-protein kinase PknF (476 aa).

Residues 12–279 (FTIVRQLGSG…FARALGHRLG (268 aa)) form the Protein kinase domain. ATP-binding positions include 18–26 (LGSGGMGEV) and lysine 41. Aspartate 137 functions as the Proton acceptor in the catalytic mechanism. The helical transmembrane segment at 306–326 (TAVIVPAVLAMLLVMAVAVAV) threads the bilayer. The tract at residues 332-376 (ADDERAAQPARTRTTTSAGTTTSVAPASTTRPAPTTPTTTGAADT) is disordered. The segment covering 338–376 (AQPARTRTTTSAGTTTSVAPASTTRPAPTTPTTTGAADT) has biased composition (low complexity).

It belongs to the protein kinase superfamily. Ser/Thr protein kinase family. Autophosphorylated. Dephosphorylated by PstP.

The protein resides in the cell membrane. The catalysed reaction is L-seryl-[protein] + ATP = O-phospho-L-seryl-[protein] + ADP + H(+). It catalyses the reaction L-threonyl-[protein] + ATP = O-phospho-L-threonyl-[protein] + ADP + H(+). A serine/threonine-protein kinase, acts on HupB in vitro. The chain is Serine/threonine-protein kinase PknF from Mycobacterium tuberculosis (strain ATCC 25177 / H37Ra).